Consider the following 340-residue polypeptide: HTH-type transcriptional regulator VirS (340 aa).

The 99-residue stretch at 236-334 folds into the HTH araC/xylS-type domain; it reads ERVVGLARRL…GMTPRQYRAY (99 aa). 2 DNA-binding regions (H-T-H motif) span residues 254–275 and 301–324; these read EAIA…AAEG and LSQI…RRWF.

Phosphorylated by PknK. Phosphorylation increases affinity for the mymA promoter.

In terms of biological role, regulates the expression of the mymA operon. The protein is HTH-type transcriptional regulator VirS (virS) of Mycobacterium tuberculosis (strain CDC 1551 / Oshkosh).